The primary structure comprises 257 residues: Snake venom serine proteinase 11 (257 aa).

A signal peptide spans 1–18 (MVLIRVLANLLILQLSYA). Residues 19-24 (QKSSEL) constitute a propeptide that is removed on maturation. Residues 25 to 248 (VVGGDECNIN…YTEWIQSIIT (224 aa)) form the Peptidase S1 domain. Cystine bridges form between Cys31-Cys162, Cys49-Cys65, Cys97-Cys255, Cys141-Cys209, Cys173-Cys188, and Cys199-Cys224. Active-site charge relay system residues include His64 and Asp109. Asn120 is a glycosylation site (N-linked (GlcNAc...) asparagine). The active-site Charge relay system is Ser203.

The protein belongs to the peptidase S1 family. Snake venom subfamily. Monomer. In terms of tissue distribution, expressed by the venom gland.

The protein resides in the secreted. Functionally, snake venom serine protease that may act in the hemostasis system of the prey. The polypeptide is Snake venom serine proteinase 11 (Crotalus adamanteus (Eastern diamondback rattlesnake)).